The primary structure comprises 304 residues: GTP cyclohydrolase FolE2 (304 aa).

Belongs to the GTP cyclohydrolase IV family.

The enzyme catalyses GTP + H2O = 7,8-dihydroneopterin 3'-triphosphate + formate + H(+). Its pathway is cofactor biosynthesis; 7,8-dihydroneopterin triphosphate biosynthesis; 7,8-dihydroneopterin triphosphate from GTP: step 1/1. Functionally, converts GTP to 7,8-dihydroneopterin triphosphate. The polypeptide is GTP cyclohydrolase FolE2 (Hahella chejuensis (strain KCTC 2396)).